Here is an 86-residue protein sequence, read N- to C-terminus: Large ribosomal subunit protein bL31B (86 aa).

Belongs to the bacterial ribosomal protein bL31 family. Type B subfamily. As to quaternary structure, part of the 50S ribosomal subunit.

The sequence is that of Large ribosomal subunit protein bL31B from Ralstonia pickettii (strain 12J).